Here is a 420-residue protein sequence, read N- to C-terminus: MATHEEFIRTQVFGTVFEITNRYTDLNPVGMGAFGLVCSATDTLVGQPVAIKKIMKPFSTAVLAKRTYRELKLLKHLRHENLICLQDIFLSPLEDIYFVTELQGTDLHRLLQTRPLEKQFVQYFLYQILRGLKYVHSAGVIHRDLKPSNILINENCDLKICDFGLARIQDPQMTGYVSTRYYRAPEIMLTWQKYDVEVDIWSAGCIFSEMIEGKPLFPGKDHVHQFSIITDLLGSPPRDVINTICSENTLKFVTSLPHRDPVPFQERFKTVEPDAVDLLRRMLVFVPKKRITAADALVHPYLAPYHDPTDEPTAEAQFDWDFNDADLPVDTWRVMMYSEILDFHKIGGGDGQIDTNAAFDDQVAAAHAAAMAQHHHQTQQQSSGKHTNPTTSSSAATITVTVPIAITMPSLIMVIKRFTT.

Residues 29-37 (VGMGAFGLV) and lysine 52 each bind ATP. Aspartate 144 acts as the Proton acceptor in catalysis. Residue threonine 174 is modified to Phosphothreonine. Positions 174-176 (TGY) match the TXY motif. Tyrosine 176 is subject to Phosphotyrosine. The interval 372–394 (AQHHHQTQQQSSGKHTNPTTSSS) is disordered.

The protein belongs to the protein kinase superfamily. Ser/Thr protein kinase family. MAP kinase subfamily. HOG1 sub-subfamily. The cofactor is Mg(2+). In terms of processing, dually phosphorylated on Thr-174 and Tyr-176, which activates the enzyme.

It is found in the cytoplasm. Its subcellular location is the nucleus. It catalyses the reaction L-seryl-[protein] + ATP = O-phospho-L-seryl-[protein] + ADP + H(+). It carries out the reaction L-threonyl-[protein] + ATP = O-phospho-L-threonyl-[protein] + ADP + H(+). Activated by tyrosine and threonine phosphorylation. In terms of biological role, mitogen-activated protein kinase involved in a signal transduction pathway that is activated by changes in the osmolarity of the extracellular environment. Controls osmotic regulation of transcription of target genes. The chain is Mitogen-activated protein kinase HOG2 (HOG2) from Zygosaccharomyces rouxii.